Consider the following 356-residue polypeptide: tRNA-specific 2-thiouridylase MnmA (356 aa).

ATP contacts are provided by residues 6-13 (AMSGGVDS) and L32. Catalysis depends on C101, which acts as the Nucleophile. The cysteines at positions 101 and 193 are disulfide-linked. Residue G125 participates in ATP binding. Positions 143 to 145 (KDQ) are interaction with tRNA. The Cysteine persulfide intermediate role is filled by C193.

This sequence belongs to the MnmA/TRMU family.

It localises to the cytoplasm. The catalysed reaction is S-sulfanyl-L-cysteinyl-[protein] + uridine(34) in tRNA + AH2 + ATP = 2-thiouridine(34) in tRNA + L-cysteinyl-[protein] + A + AMP + diphosphate + H(+). Catalyzes the 2-thiolation of uridine at the wobble position (U34) of tRNA, leading to the formation of s(2)U34. The chain is tRNA-specific 2-thiouridylase MnmA from Mycobacteroides abscessus (strain ATCC 19977 / DSM 44196 / CCUG 20993 / CIP 104536 / JCM 13569 / NCTC 13031 / TMC 1543 / L948) (Mycobacterium abscessus).